Reading from the N-terminus, the 367-residue chain is Glutamate 5-kinase (367 aa).

Lys-10 lines the ATP pocket. Substrate is bound by residues Ser-50, Asp-137, and Asn-149. ATP is bound by residues Thr-169–Asp-170 and Thr-211–Lys-217. The 79-residue stretch at Ala-275–Glu-353 folds into the PUA domain.

It belongs to the glutamate 5-kinase family.

It localises to the cytoplasm. It carries out the reaction L-glutamate + ATP = L-glutamyl 5-phosphate + ADP. Its pathway is amino-acid biosynthesis; L-proline biosynthesis; L-glutamate 5-semialdehyde from L-glutamate: step 1/2. Functionally, catalyzes the transfer of a phosphate group to glutamate to form L-glutamate 5-phosphate. In Cronobacter sakazakii (strain ATCC BAA-894) (Enterobacter sakazakii), this protein is Glutamate 5-kinase.